The chain runs to 421 residues: DUF724 domain-containing protein 8 (421 aa).

Polar residues-rich tracts occupy residues Thr149–Glu165 and Pro199–Asn213. Residues Thr149–Leu229 are disordered. The DUF724 domain maps to Val246 to Pro420. Positions Glu361–Ser397 form a coiled coil.

Expressed in leaves and flowers, and at lower levels in roots, stems and siliques.

It localises to the nucleus. Functionally, may be involved in the polar growth of plant cells via transportation of RNAs. This chain is DUF724 domain-containing protein 8, found in Arabidopsis thaliana (Mouse-ear cress).